Reading from the N-terminus, the 74-residue chain is Putative membrane protein insertion efficiency factor (74 aa).

The protein belongs to the UPF0161 family.

Its subcellular location is the cell inner membrane. Its function is as follows. Could be involved in insertion of integral membrane proteins into the membrane. This chain is Putative membrane protein insertion efficiency factor, found in Leptospira interrogans serogroup Icterohaemorrhagiae serovar copenhageni (strain Fiocruz L1-130).